We begin with the raw amino-acid sequence, 311 residues long: Ornithine carbamoyltransferase (311 aa).

Carbamoyl phosphate contacts are provided by residues Ser-59 to Thr-62, Gln-86, Arg-110, and His-137 to Gln-140. L-ornithine-binding positions include Asn-168, Asp-228, and Ser-232–Met-233. Carbamoyl phosphate contacts are provided by residues Cys-267–Leu-268 and Arg-295.

The protein belongs to the aspartate/ornithine carbamoyltransferase superfamily. OTCase family.

It is found in the cytoplasm. It catalyses the reaction carbamoyl phosphate + L-ornithine = L-citrulline + phosphate + H(+). It participates in amino-acid biosynthesis; L-arginine biosynthesis; L-arginine from L-ornithine and carbamoyl phosphate: step 1/3. Functionally, reversibly catalyzes the transfer of the carbamoyl group from carbamoyl phosphate (CP) to the N(epsilon) atom of ornithine (ORN) to produce L-citrulline. The polypeptide is Ornithine carbamoyltransferase (Caulobacter vibrioides (strain ATCC 19089 / CIP 103742 / CB 15) (Caulobacter crescentus)).